Here is a 266-residue protein sequence, read N- to C-terminus: Glioma pathogenesis-related protein 1 (266 aa).

Residues 1–21 form the signal peptide; it reads MRVTLATIAWMVSFVSNYSHT. Residues 38–175 enclose the SCP domain; that stretch reads VRIHNKFRSE…SNGAHFICNY (138 aa). Residues 233–255 form a helical membrane-spanning segment; that stretch reads YTSLFLIVNSVILILSVIITILV.

Belongs to the CRISP family. According to PubMed:8973356, it is ubiquitously expressed with high levels in lung and kidney and low levels in heart and liver. Highly expressed in cell lines derived from nervous system tumors arising from glia, low or absent in non-glial-derived nervous system tumor cell lines. Also found in fetal kidney. According to PubMed:7607567 it is expressed only in brain tumor glioblastoma multiforme/astrocytoma and not in other nervous system tumors or normal fetal or adult tissues.

The protein localises to the membrane. The chain is Glioma pathogenesis-related protein 1 (GLIPR1) from Homo sapiens (Human).